The primary structure comprises 199 residues: Small ribosomal subunit protein uS4c (199 aa).

A compositionally biased stretch (basic and acidic residues) spans 1–24 (MESDQSKVESDQSKMESDQSKVES). Residues 1–35 (MESDQSKVESDQSKMESDQSKVESDQSISQSTSKK) form a disordered region. The S4 RNA-binding domain occupies 84 to 146 (MRLDNIIFRL…QKSQELIKRN (63 aa)).

Belongs to the universal ribosomal protein uS4 family. As to quaternary structure, part of the 30S ribosomal subunit. Contacts protein S5. The interaction surface between S4 and S5 is involved in control of translational fidelity.

It localises to the plastid. The protein resides in the chloroplast. One of the primary rRNA binding proteins, it binds directly to 16S rRNA where it nucleates assembly of the body of the 30S subunit. Its function is as follows. With S5 and S12 plays an important role in translational accuracy. This Psilotum nudum (Whisk fern) protein is Small ribosomal subunit protein uS4c (rps4).